We begin with the raw amino-acid sequence, 549 residues long: Glucose-6-phosphate isomerase (549 aa).

E353 functions as the Proton donor in the catalytic mechanism. Residues H384 and K513 contribute to the active site.

It belongs to the GPI family.

It is found in the cytoplasm. The catalysed reaction is alpha-D-glucose 6-phosphate = beta-D-fructose 6-phosphate. Its pathway is carbohydrate biosynthesis; gluconeogenesis. It participates in carbohydrate degradation; glycolysis; D-glyceraldehyde 3-phosphate and glycerone phosphate from D-glucose: step 2/4. In terms of biological role, catalyzes the reversible isomerization of glucose-6-phosphate to fructose-6-phosphate. This is Glucose-6-phosphate isomerase from Brucella anthropi (strain ATCC 49188 / DSM 6882 / CCUG 24695 / JCM 21032 / LMG 3331 / NBRC 15819 / NCTC 12168 / Alc 37) (Ochrobactrum anthropi).